We begin with the raw amino-acid sequence, 142 residues long: Large ribosomal subunit protein uL11 (142 aa).

The protein belongs to the universal ribosomal protein uL11 family. Part of the ribosomal stalk of the 50S ribosomal subunit. Interacts with L10 and the large rRNA to form the base of the stalk. L10 forms an elongated spine to which L12 dimers bind in a sequential fashion forming a multimeric L10(L12)X complex. Post-translationally, one or more lysine residues are methylated.

Forms part of the ribosomal stalk which helps the ribosome interact with GTP-bound translation factors. The protein is Large ribosomal subunit protein uL11 of Xanthomonas campestris pv. campestris (strain 8004).